A 381-amino-acid polypeptide reads, in one-letter code: L-lactate dehydrogenase A-like 6B (381 aa).

Residues 101-106 (DLDEDK) and Arg-148 each bind NAD(+). Substrate-binding residues include Arg-155, Asn-187, and Arg-218. Asn-187 contacts NAD(+). The Proton acceptor role is filled by His-242. Thr-297 serves as a coordination point for substrate.

This sequence belongs to the LDH/MDH superfamily. LDH family. In terms of tissue distribution, testis specific.

The catalysed reaction is (S)-lactate + NAD(+) = pyruvate + NADH + H(+). It functions in the pathway fermentation; pyruvate fermentation to lactate; (S)-lactate from pyruvate: step 1/1. This chain is L-lactate dehydrogenase A-like 6B (LDHAL6B), found in Homo sapiens (Human).